We begin with the raw amino-acid sequence, 272 residues long: Probable nitrilase C965.09 (272 aa).

Positions 3–244 constitute a CN hydrolase domain; the sequence is ANIACVQMAP…EGVISYTVDL (242 aa). Glu45 (proton acceptor) is an active-site residue. The active-site Proton donor is Lys118. Cys150 functions as the Nucleophile in the catalytic mechanism.

It belongs to the carbon-nitrogen hydrolase superfamily.

It localises to the cytoplasm. Its subcellular location is the nucleus. The sequence is that of Probable nitrilase C965.09 from Schizosaccharomyces pombe (strain 972 / ATCC 24843) (Fission yeast).